Reading from the N-terminus, the 317-residue chain is Ciliary microtubule inner protein 2A (317 aa).

The tract at residues 131-153 (TPDTPHPPCPPGRKGDSRDLGHP) is disordered.

Belongs to the CIMIP2 family. Microtubule inner protein component of sperm flagellar doublet microtubules.

Its subcellular location is the cytoplasm. The protein localises to the cytoskeleton. It is found in the flagellum axoneme. Its function is as follows. Microtubule inner protein (MIP) part of the dynein-decorated doublet microtubules (DMTs) in flagellum axoneme. Binds to the intra-tubulin interfaces. The chain is Ciliary microtubule inner protein 2A from Homo sapiens (Human).